A 698-amino-acid polypeptide reads, in one-letter code: Polyribonucleotide nucleotidyltransferase (698 aa).

Positions 490 and 496 each coordinate Mg(2+). The region spanning 558-617 (PVIYTMRIPQDKIGALIGPGGKNIKRITETTDTKIDINDDGVVQIAAVNGDKLAMAKAEI) is the KH domain. The region spanning 627–695 (NKIYKGKVVS…NNGKVRLSRK (69 aa)) is the S1 motif domain.

Belongs to the polyribonucleotide nucleotidyltransferase family. Mg(2+) serves as cofactor.

The protein localises to the cytoplasm. It carries out the reaction RNA(n+1) + phosphate = RNA(n) + a ribonucleoside 5'-diphosphate. Functionally, involved in mRNA degradation. Catalyzes the phosphorolysis of single-stranded polyribonucleotides processively in the 3'- to 5'-direction. The chain is Polyribonucleotide nucleotidyltransferase from Elusimicrobium minutum (strain Pei191).